Here is an 85-residue protein sequence, read N- to C-terminus: UPF0291 protein str0508 (85 aa).

The disordered stretch occupies residues 62–85 (TPEKLRQVQREKGLHGRSLDDPES).

It belongs to the UPF0291 family.

It is found in the cytoplasm. The chain is UPF0291 protein str0508 from Streptococcus thermophilus (strain CNRZ 1066).